Here is a 309-residue protein sequence, read N- to C-terminus: Glutaminase (309 aa).

Positions 65, 117, 162, 169, 193, 245, and 263 each coordinate substrate.

This sequence belongs to the glutaminase family. Homotetramer.

It catalyses the reaction L-glutamine + H2O = L-glutamate + NH4(+). The chain is Glutaminase from Bacillus cereus (strain ATCC 10987 / NRS 248).